Consider the following 306-residue polypeptide: Aspartate carbamoyltransferase catalytic subunit (306 aa).

Carbamoyl phosphate is bound by residues arginine 49 and threonine 50. Lysine 77 lines the L-aspartate pocket. Carbamoyl phosphate is bound by residues arginine 99, histidine 127, and glutamine 130. Residues arginine 160 and arginine 211 each coordinate L-aspartate. Positions 250 and 251 each coordinate carbamoyl phosphate.

The protein belongs to the aspartate/ornithine carbamoyltransferase superfamily. ATCase family. As to quaternary structure, heterododecamer (2C3:3R2) of six catalytic PyrB chains organized as two trimers (C3), and six regulatory PyrI chains organized as three dimers (R2).

It carries out the reaction carbamoyl phosphate + L-aspartate = N-carbamoyl-L-aspartate + phosphate + H(+). Its pathway is pyrimidine metabolism; UMP biosynthesis via de novo pathway; (S)-dihydroorotate from bicarbonate: step 2/3. Catalyzes the condensation of carbamoyl phosphate and aspartate to form carbamoyl aspartate and inorganic phosphate, the committed step in the de novo pyrimidine nucleotide biosynthesis pathway. This is Aspartate carbamoyltransferase catalytic subunit from Bacillus licheniformis (strain ATCC 14580 / DSM 13 / JCM 2505 / CCUG 7422 / NBRC 12200 / NCIMB 9375 / NCTC 10341 / NRRL NRS-1264 / Gibson 46).